A 286-amino-acid chain; its full sequence is Probable endonuclease 4 (286 aa).

H67, H107, E146, D180, H183, H217, D230, H232, and E262 together coordinate Zn(2+).

Belongs to the AP endonuclease 2 family. Requires Zn(2+) as cofactor.

The enzyme catalyses Endonucleolytic cleavage to 5'-phosphooligonucleotide end-products.. Its function is as follows. Endonuclease IV plays a role in DNA repair. It cleaves phosphodiester bonds at apurinic or apyrimidinic (AP) sites, generating a 3'-hydroxyl group and a 5'-terminal sugar phosphate. The polypeptide is Probable endonuclease 4 (Methanosphaerula palustris (strain ATCC BAA-1556 / DSM 19958 / E1-9c)).